The sequence spans 366 residues: Chorismate synthase (366 aa).

NADP(+)-binding residues include Arg-48 and Arg-54. Residues 125–127 (RSS), 238–239 (NA), Gly-278, 293–297 (KPTSS), and Arg-319 contribute to the FMN site.

The protein belongs to the chorismate synthase family. As to quaternary structure, homotetramer. FMNH2 is required as a cofactor.

It catalyses the reaction 5-O-(1-carboxyvinyl)-3-phosphoshikimate = chorismate + phosphate. It functions in the pathway metabolic intermediate biosynthesis; chorismate biosynthesis; chorismate from D-erythrose 4-phosphate and phosphoenolpyruvate: step 7/7. Its function is as follows. Catalyzes the anti-1,4-elimination of the C-3 phosphate and the C-6 proR hydrogen from 5-enolpyruvylshikimate-3-phosphate (EPSP) to yield chorismate, which is the branch point compound that serves as the starting substrate for the three terminal pathways of aromatic amino acid biosynthesis. This reaction introduces a second double bond into the aromatic ring system. This Neisseria meningitidis serogroup B (strain ATCC BAA-335 / MC58) protein is Chorismate synthase.